A 207-amino-acid chain; its full sequence is Large ribosomal subunit protein bL25 (207 aa).

Positions 171–207 (ESVVTVEVPEDATESTTAPEAAAAPADAAAAPAADAK) are disordered. Low complexity predominate over residues 184-207 (ESTTAPEAAAAPADAAAAPAADAK).

It belongs to the bacterial ribosomal protein bL25 family. CTC subfamily. In terms of assembly, part of the 50S ribosomal subunit; part of the 5S rRNA/L5/L18/L25 subcomplex. Contacts the 5S rRNA. Binds to the 5S rRNA independently of L5 and L18.

Functionally, this is one of the proteins that binds to the 5S RNA in the ribosome where it forms part of the central protuberance. This is Large ribosomal subunit protein bL25 from Bifidobacterium longum subsp. infantis (strain ATCC 15697 / DSM 20088 / JCM 1222 / NCTC 11817 / S12).